Reading from the N-terminus, the 474-residue chain is Glutamate--tRNA ligase (474 aa).

A 'HIGH' region motif is present at residues 9 to 19 (PSPTGYLHVGG). The short motif at 240–244 (KLSKR) is the 'KMSKS' region element. Position 243 (Lys-243) interacts with ATP.

It belongs to the class-I aminoacyl-tRNA synthetase family. Glutamate--tRNA ligase type 1 subfamily. In terms of assembly, monomer.

Its subcellular location is the cytoplasm. It catalyses the reaction tRNA(Glu) + L-glutamate + ATP = L-glutamyl-tRNA(Glu) + AMP + diphosphate. Catalyzes the attachment of glutamate to tRNA(Glu) in a two-step reaction: glutamate is first activated by ATP to form Glu-AMP and then transferred to the acceptor end of tRNA(Glu). This Aliivibrio fischeri (strain ATCC 700601 / ES114) (Vibrio fischeri) protein is Glutamate--tRNA ligase.